The sequence spans 255 residues: Cytochrome c oxidase subunit 2 (255 aa).

Over 1 to 42 (MKFFFFSFINYKVLNDAARPWQIGFQDPATPIMEGIVNLHHD) the chain is Mitochondrial intermembrane. Residues 43 to 63 (IIFFLIIIIIFVSWILFRTLF) traverse the membrane as a helical segment. Over 64 to 83 (LFNSKTNPVAYNFSHGTFIE) the chain is Mitochondrial matrix. The chain crosses the membrane as a helical span at residues 84–104 (LLWTLTPSLVLIGIAVPSFAL). The Mitochondrial intermembrane portion of the chain corresponds to 105 to 255 (LYSIDEIIDP…IRWVQNKILD (151 aa)). Cu cation is bound by residues His-187, Cys-222, Glu-224, Cys-226, His-230, and Met-233. A Mg(2+)-binding site is contributed by Glu-224.

The protein belongs to the cytochrome c oxidase subunit 2 family. Component of the cytochrome c oxidase (complex IV, CIV), a multisubunit enzyme composed of a catalytic core of 3 subunits and several supernumerary subunits. The complex exists as a monomer or a dimer and forms supercomplexes (SCs) in the inner mitochondrial membrane with ubiquinol-cytochrome c oxidoreductase (cytochrome b-c1 complex, complex III, CIII). The cofactor is Cu cation.

The protein localises to the mitochondrion inner membrane. The catalysed reaction is 4 Fe(II)-[cytochrome c] + O2 + 8 H(+)(in) = 4 Fe(III)-[cytochrome c] + 2 H2O + 4 H(+)(out). Functionally, component of the cytochrome c oxidase, the last enzyme in the mitochondrial electron transport chain which drives oxidative phosphorylation. The respiratory chain contains 3 multisubunit complexes succinate dehydrogenase (complex II, CII), ubiquinol-cytochrome c oxidoreductase (cytochrome b-c1 complex, complex III, CIII) and cytochrome c oxidase (complex IV, CIV), that cooperate to transfer electrons derived from NADH and succinate to molecular oxygen, creating an electrochemical gradient over the inner membrane that drives transmembrane transport and the ATP synthase. Cytochrome c oxidase is the component of the respiratory chain that catalyzes the reduction of oxygen to water. Electrons originating from reduced cytochrome c in the intermembrane space (IMS) are transferred via the dinuclear copper A center (CU(A)) of subunit 2 and heme A of subunit 1 to the active site in subunit 1, a binuclear center (BNC) formed by heme A3 and copper B (CU(B)). The BNC reduces molecular oxygen to 2 water molecules using 4 electrons from cytochrome c in the IMS and 4 protons from the mitochondrial matrix. The protein is Cytochrome c oxidase subunit 2 (COX2) of Cyanidium caldarium (Red alga).